A 420-amino-acid polypeptide reads, in one-letter code: Dynein axonemal assembly factor 4 (420 aa).

The region spanning 3-87 (LQVSDYSWQQ…KEAAMWETLS (85 aa)) is the CS domain. The interval 7–103 (DYSWQQTKTA…EMMQRIREKS (97 aa)) is mediates interaction with ESR1 and STUB1. TPR repeat units follow at residues 290–323 (PEWL…NNKM), 324–357 (PLLY…LMPP), and 366–399 (MKAH…DPSN).

As to quaternary structure, interacts with ZMYND10. Interacts with STUB1. Interacts with ESR1 and ESR2. Interacts with DNAAF2. Interacts with CCT3, CCT4, CCT5 and CCT8. Interacts with DNAAF6/PIH1D3.

It localises to the nucleus. The protein localises to the cytoplasm. It is found in the cell projection. Its subcellular location is the neuron projection. The protein resides in the dynein axonemal particle. Functionally, involved in neuronal migration during development of the cerebral neocortex. May regulate the stability and proteasomal degradation of the estrogen receptors that play an important role in neuronal differentiation, survival and plasticity. Axonemal dynein assembly factor required for ciliary motility. This chain is Dynein axonemal assembly factor 4, found in Pan paniscus (Pygmy chimpanzee).